Reading from the N-terminus, the 203-residue chain is Glycerol-3-phosphate acyltransferase (203 aa).

5 helical membrane-spanning segments follow: residues 5-25 (VLGL…FGVV), 55-75 (KLGI…ILVA), 88-108 (FTVL…WLGF), 114-134 (VATG…AGAV), and 162-182 (FVAH…AALI).

It belongs to the PlsY family. As to quaternary structure, probably interacts with PlsX.

Its subcellular location is the cell inner membrane. It catalyses the reaction an acyl phosphate + sn-glycerol 3-phosphate = a 1-acyl-sn-glycero-3-phosphate + phosphate. It functions in the pathway lipid metabolism; phospholipid metabolism. Catalyzes the transfer of an acyl group from acyl-phosphate (acyl-PO(4)) to glycerol-3-phosphate (G3P) to form lysophosphatidic acid (LPA). This enzyme utilizes acyl-phosphate as fatty acyl donor, but not acyl-CoA or acyl-ACP. The polypeptide is Glycerol-3-phosphate acyltransferase (Anaeromyxobacter sp. (strain Fw109-5)).